The sequence spans 203 residues: Chemotactic transduction protein ChpE (203 aa).

5 helical membrane-spanning segments follow: residues 3–23 (AIFL…GAVF), 46–66 (LIGD…LLGY), 69–89 (VRIP…VQGL), 123–143 (NVVY…GTPN), and 149–169 (VFFA…AALV).

The protein belongs to the Rht family.

It is found in the cell membrane. The chain is Chemotactic transduction protein ChpE (chpE) from Pseudomonas aeruginosa (strain ATCC 15692 / DSM 22644 / CIP 104116 / JCM 14847 / LMG 12228 / 1C / PRS 101 / PAO1).